The chain runs to 378 residues: Flap endonuclease 1 (378 aa).

The interval 1–105 (MGIKGLNSII…HELDKRTERR (105 aa)) is N-domain. Position 34 (aspartate 34) interacts with Mg(2+). DNA-binding residues include arginine 47 and arginine 71. Aspartate 87, glutamate 156, glutamate 158, aspartate 177, and aspartate 179 together coordinate Mg(2+). The tract at residues 120–251 (EIMKHERRLV…VTALKLIKEH (132 aa)) is I-domain. Glutamate 156 provides a ligand contact to DNA. DNA is bound by residues glycine 229 and aspartate 231. Aspartate 231 provides a ligand contact to Mg(2+). The interval 337 to 345 (VQGRLDSFF) is interaction with PCNA. Low complexity predominate over residues 356-367 (AASARKAQAAKK). A disordered region spans residues 356 to 378 (AASARKAQAAKKTNQKGKVLKRR). The segment covering 368–378 (TNQKGKVLKRR) has biased composition (basic residues).

It belongs to the XPG/RAD2 endonuclease family. FEN1 subfamily. In terms of assembly, interacts with PCNA. Three molecules of FEN1 bind to one PCNA trimer with each molecule binding to one PCNA monomer. PCNA stimulates the nuclease activity without altering cleavage specificity. It depends on Mg(2+) as a cofactor. In terms of processing, phosphorylated. Phosphorylation upon DNA damage induces relocalization to the nuclear plasma.

The protein localises to the nucleus. Its subcellular location is the nucleolus. It is found in the nucleoplasm. The protein resides in the mitochondrion. Its function is as follows. Structure-specific nuclease with 5'-flap endonuclease and 5'-3' exonuclease activities involved in DNA replication and repair. During DNA replication, cleaves the 5'-overhanging flap structure that is generated by displacement synthesis when DNA polymerase encounters the 5'-end of a downstream Okazaki fragment. It enters the flap from the 5'-end and then tracks to cleave the flap base, leaving a nick for ligation. Also involved in the long patch base excision repair (LP-BER) pathway, by cleaving within the apurinic/apyrimidinic (AP) site-terminated flap. Acts as a genome stabilization factor that prevents flaps from equilibrating into structures that lead to duplications and deletions. Also possesses 5'-3' exonuclease activity on nicked or gapped double-stranded DNA, and exhibits RNase H activity. Also involved in replication and repair of rDNA and in repairing mitochondrial DNA. In Eremothecium gossypii (strain ATCC 10895 / CBS 109.51 / FGSC 9923 / NRRL Y-1056) (Yeast), this protein is Flap endonuclease 1.